Consider the following 239-residue polypeptide: Small ribosomal subunit protein uS2 (239 aa).

It belongs to the universal ribosomal protein uS2 family.

In Prochlorococcus marinus (strain MIT 9303), this protein is Small ribosomal subunit protein uS2.